We begin with the raw amino-acid sequence, 393 residues long: NAD(P)H-quinone oxidoreductase subunit H, chloroplastic (393 aa).

Belongs to the complex I 49 kDa subunit family. NDH is composed of at least 16 different subunits, 5 of which are encoded in the nucleus.

It localises to the plastid. The protein localises to the chloroplast thylakoid membrane. It carries out the reaction a plastoquinone + NADH + (n+1) H(+)(in) = a plastoquinol + NAD(+) + n H(+)(out). It catalyses the reaction a plastoquinone + NADPH + (n+1) H(+)(in) = a plastoquinol + NADP(+) + n H(+)(out). Its function is as follows. NDH shuttles electrons from NAD(P)H:plastoquinone, via FMN and iron-sulfur (Fe-S) centers, to quinones in the photosynthetic chain and possibly in a chloroplast respiratory chain. The immediate electron acceptor for the enzyme in this species is believed to be plastoquinone. Couples the redox reaction to proton translocation, and thus conserves the redox energy in a proton gradient. This chain is NAD(P)H-quinone oxidoreductase subunit H, chloroplastic, found in Ceratophyllum demersum (Rigid hornwort).